The following is a 244-amino-acid chain: Probable cytokinin riboside 5'-monophosphate phosphoribohydrolase LOGL2 (244 aa).

Residues glutamate 91, 109 to 110 (RK), and 126 to 132 (GYGTLEE) contribute to the substrate site.

It belongs to the LOG family.

It carries out the reaction N(6)-(dimethylallyl)adenosine 5'-phosphate + H2O = N(6)-dimethylallyladenine + D-ribose 5-phosphate. The enzyme catalyses 9-ribosyl-trans-zeatin 5'-phosphate + H2O = trans-zeatin + D-ribose 5-phosphate. Functionally, cytokinin-activating enzyme working in the direct activation pathway. Phosphoribohydrolase that converts inactive cytokinin nucleotides to the biologically active free-base forms. In Oryza sativa subsp. japonica (Rice), this protein is Probable cytokinin riboside 5'-monophosphate phosphoribohydrolase LOGL2 (LOGL2).